Consider the following 96-residue polypeptide: Large ribosomal subunit protein uL23 (96 aa).

The protein belongs to the universal ribosomal protein uL23 family. Part of the 50S ribosomal subunit. Contacts protein L29, and trigger factor when it is bound to the ribosome.

Functionally, one of the early assembly proteins it binds 23S rRNA. One of the proteins that surrounds the polypeptide exit tunnel on the outside of the ribosome. Forms the main docking site for trigger factor binding to the ribosome. This chain is Large ribosomal subunit protein uL23, found in Vesicomyosocius okutanii subsp. Calyptogena okutanii (strain HA).